A 135-amino-acid polypeptide reads, in one-letter code: Antennal-specific protein OS-C (135 aa).

Positions 1-27 (MGFHMGRQLLLSGFLLVMLQMVTQTQA) are cleaved as a signal peptide. The segment at 43–84 (VIKREGDDDGDDDDSSSEETVEDSEESRRRRREVNTDNTPSA) is disordered. The segment covering 49–67 (DDDGDDDDSSSEETVEDSE) has biased composition (acidic residues).

As to expression, antenna. In the third antennal segment. Expressed in sencilla coeloconica.

The protein is Antennal-specific protein OS-C (Os-C) of Drosophila melanogaster (Fruit fly).